The primary structure comprises 146 residues: 3-dehydroquinate dehydratase (146 aa).

Tyrosine 23 acts as the Proton acceptor in catalysis. Positions 74, 80, and 87 each coordinate substrate. Catalysis depends on histidine 100, which acts as the Proton donor. Residues 101–102 and arginine 111 contribute to the substrate site; that span reads IS.

This sequence belongs to the type-II 3-dehydroquinase family. In terms of assembly, homododecamer.

It catalyses the reaction 3-dehydroquinate = 3-dehydroshikimate + H2O. The protein operates within metabolic intermediate biosynthesis; chorismate biosynthesis; chorismate from D-erythrose 4-phosphate and phosphoenolpyruvate: step 3/7. In terms of biological role, catalyzes a trans-dehydration via an enolate intermediate. This Bacillus cereus (strain B4264) protein is 3-dehydroquinate dehydratase.